Consider the following 798-residue polypeptide: Heterogeneous nuclear ribonucleoprotein U (798 aa).

At Ser2 the chain carries N-acetylserine. Phosphoserine is present on Ser4. Residues 8–42 enclose the SAP domain; that stretch reads VKKLKVSELKEELKKRRLSDKGLKADLMDRLQAAL. Residues Lys17 and Lys21 each carry the N6-acetyllysine modification. Residues 41 to 229 are disordered; sequence ALDNEAGGRP…VKRPREDHGR (189 aa). Ser58 carries the post-translational modification Phosphoserine. 2 stretches are compositionally biased toward low complexity: residues 71–80 and 103–113; these read AGLEQEAAAG and ENGAAGAADAG. Acidic residues-rich tracts occupy residues 114 to 128 and 134 to 147; these read AMEE…ENGD and EGED…EGAG. The span at 153 to 169 shows a compositional bias: low complexity; it reads GEQQSQPPAAAQQASQQ. Lys179 is modified (N6-acetyllysine). Ser180 bears the ADP-ribosylserine mark. The span at 192–203 shows a compositional bias: low complexity; it reads APPGARQGQQQA. The segment covering 207-229 has biased composition (basic and acidic residues); sequence GKTEQKAGDKKRGVKRPREDHGR. Citrulline is present on Arg229. Lys239 carries the N6-acetyllysine; alternate modification. Residue Lys239 forms a Glycyl lysine isopeptide (Lys-Gly) (interchain with G-Cter in SUMO1); alternate linkage. Lys239 participates in a covalent cross-link: Glycyl lysine isopeptide (Lys-Gly) (interchain with G-Cter in SUMO2); alternate. At Tyr240 the chain carries Phosphotyrosine. Phosphoserine occurs at positions 241 and 245. The 197-residue stretch at 242-438 folds into the B30.2/SPRY domain; it reads RAKSPQPPVE…VEFNFGQKEK (197 aa). Thr260 is subject to Phosphothreonine. Position 326 is an N6-acetyllysine (Lys326). The ATPase domain stretch occupies residues 462 to 646; it reads PKGPEEKKDC…QKLLEQYKEE (185 aa). Lys469 participates in a covalent cross-link: Glycyl lysine isopeptide (Lys-Gly) (interchain with G-Cter in SUMO2). 478-485 lines the ATP pocket; the sequence is GLPGAGKT. N6-acetyllysine; alternate is present on residues Lys490 and Lys498. Glycyl lysine isopeptide (Lys-Gly) (interchain with G-Cter in SUMO2); alternate cross-links involve residues Lys490 and Lys498. Thr506 carries the phosphothreonine modification. Lys510 participates in a covalent cross-link: Glycyl lysine isopeptide (Lys-Gly) (interchain with G-Cter in SUMO2). Position 525 is an N6-acetyllysine (Lys525). The residue at position 539 (Lys539) is an N6-acetyllysine; alternate. Lys539 is covalently cross-linked (Glycyl lysine isopeptide (Lys-Gly) (interchain with G-Cter in SUMO2); alternate). Lys548 participates in a covalent cross-link: Glycyl lysine isopeptide (Lys-Gly) (interchain with G-Cter in SUMO2). Thr556 bears the Phosphothreonine mark. Glycyl lysine isopeptide (Lys-Gly) (interchain with G-Cter in SUMO2) cross-links involve residues Lys583 and Lys600. The segment at 585 to 600 is actin-binding; it reads EDYKQRTQKKAEVEGK. At Lys609 the chain carries N6-acetyllysine; alternate. Lys609 participates in a covalent cross-link: Glycyl lysine isopeptide (Lys-Gly) (interchain with G-Cter in SUMO2); alternate. A coiled-coil region spans residues 624-651; it reads DEITYVELQKEEAQKLLEQYKEESKKAL. Glycyl lysine isopeptide (Lys-Gly) (interchain with G-Cter in SUMO2) cross-links involve residues Lys638 and Lys644. Positions 645–657 are enriched in basic and acidic residues; the sequence is EESKKALPPEKKQ. Positions 645–727 are disordered; that stretch reads EESKKALPPE…GSGGIGYPYP (83 aa). Position 676 is an omega-N-methylarginine (Arg676). The segment covering 684–702 has biased composition (gly residues); the sequence is GGFNMRGGNFRGGAPGNRG. The interval 688–713 is RNA-binding RGG-box; that stretch reads MRGGNFRGGAPGNRGGYNRRGNMPQR. 3 positions are modified to asymmetric dimethylarginine: Arg689, Arg694, and Arg701. Asymmetric dimethylarginine; alternate occurs at positions 707 and 713. 2 positions are modified to omega-N-methylarginine; alternate: Arg707 and Arg713. Gly residues predominate over residues 713–723; the sequence is RGGGGGSGGIG. 2 positions are modified to asymmetric dimethylarginine: Arg728 and Arg735. Residues 743–772 form a disordered region; that stretch reads NYNRGGMPNRGNYNQNFRGRGNNRGYKNQS. Position 787 is an N6-acetyllysine; alternate (Lys787). Lys787 participates in a covalent cross-link: Glycyl lysine isopeptide (Lys-Gly) (interchain with G-Cter in SUMO2); alternate.

Oligomer (via ATPase domain and RNA-binding RGG-box region); oligomerization occurs upon ATP-binding in a chromatin-associated RNAs (caRNAs)- and transcription-dependent manner and is required for chromatin decompaction. ATP hydrolysis is required to cycle from an oligomeric to monomeric state to compact chromatin. Component of the coding region determinant (CRD)-mediated complex, composed of DHX9, HNRNPU, IGF2BP1, SYNCRIP and YBX1. Identified in the spliceosome C complex. Identified in a IGF2BP1-dependent mRNP granule complex containing untranslated mRNAs. Associates with heterogeneous nuclear ribonucleoprotein (hnRNP) particles. Associates (via middle region) with the C-terminal domain (CTD) RNA polymerase II (Pol II) holoenzyme; this association occurs in a RNA-independent manner. Associates (via middle region) with the core-TFIIH basal transcription factor complex; this association inhibits the CTD phosphorylation of RNA polymerase II holoenzyme by down-regulating TFIIH kinase activity. Associates with the telomerase holoenzyme complex. Associates with spindle microtubules (MTs) in a TPX2-dependent manner. Interacts (via C-terminus) with actin; this interaction is direct and mediates association with the phosphorylated CTD of RNA polymerase II and is disrupted in presence of the long non-coding H19 RNA. Interacts with AURKA. Interacts (via C-terminus) with CBX5; this interaction is, at least in part, RNA-dependent. Interacts with CR2. Interacts with CRY1. Interacts (via C-terminus) with EP300; this interaction enhances DNA-binding to nuclear scaffold/matrix attachment region (S/MAR) elements. Interacts with ERBB4. Interacts with GEMIN5. Interacts with IGF2BP1. Interacts with IGF2BP2 and IGF2BP3. Interacts with NCL; this interaction occurs during mitosis. Interacts (via C-terminus) with NR3C1 (via C-terminus). Interacts with PLK1; this interaction induces phosphorylation of HNRNPU at Ser-58 in mitosis. Interacts with POU3F4. Interacts with SMARCA4; this interaction occurs in embryonic stem cells and stimulates global Pol II-mediated transcription. Interacts (via C-terminus) with TOP2A; this interaction protects the topoisomerase TOP2A from degradation and positively regulates the relaxation of supercoiled DNA by TOP2A in a RNA-dependent manner. Interacts with TPX2; this interaction recruits HNRNPU to spindle microtubules (MTs). Interacts with UBQLN2. Interacts (via RNA-binding RGG-box region) with ZBTB7B; the interaction facilitates the recruitment of long non-coding RNA Blnc1 by ZBTB7B. Interacts with ERCC6. Post-translationally, cleaved at Asp-94 by CASP3 during T-cell apoptosis, resulting in a loss of DNA- and chromatin-binding activities. Extensively phosphorylated. Phosphorylated on Ser-58 by PLK1 and dephosphorylated by protein phosphatase 2A (PP2A) in mitosis. In terms of processing, arg-707 and Arg-713 are dimethylated, probably to asymmetric dimethylarginine. Post-translationally, citrullinated by PADI4.

The protein resides in the nucleus. It localises to the nucleus matrix. The protein localises to the chromosome. Its subcellular location is the nucleus speckle. It is found in the cytoplasm. The protein resides in the cytoskeleton. It localises to the microtubule organizing center. The protein localises to the centrosome. Its subcellular location is the centromere. It is found in the kinetochore. The protein resides in the spindle. It localises to the spindle pole. The protein localises to the midbody. Its subcellular location is the cell surface. It is found in the cytoplasmic granule. Functionally, DNA- and RNA-binding protein involved in several cellular processes such as nuclear chromatin organization, telomere-length regulation, transcription, mRNA alternative splicing and stability, Xist-mediated transcriptional silencing and mitotic cell progression. Plays a role in the regulation of interphase large-scale gene-rich chromatin organization through chromatin-associated RNAs (caRNAs) in a transcription-dependent manner, and thereby maintains genomic stability. Required for the localization of the long non-coding Xist RNA on the inactive chromosome X (Xi) and the subsequent initiation and maintenance of X-linked transcriptional gene silencing during X-inactivation. Required for the topoisomerase TOP2A protein stability and activity in a RNA-dependent manner. Plays a role as a RNA polymerase II (Pol II) holoenzyme transcription regulator. Promotes transcription initiation by direct association with the core-TFIIH basal transcription factor complex for the assembly of a functional pre-initiation complex with Pol II in a actin-dependent manner. Blocks Pol II transcription elongation activity by inhibiting the C-terminal domain (CTD) phosphorylation of Pol II and dissociates from Pol II pre-initiation complex prior to productive transcription elongation. Positively regulates CBX5-induced transcriptional gene silencing and retention of CBX5 in the nucleus. Negatively regulates glucocorticoid-mediated transcriptional activation. Key regulator of transcription initiation and elongation in embryonic stem cells upon leukemia inhibitory factor (LIF) signaling. Involved in the long non-coding RNA H19-mediated Pol II transcriptional repression. Participates in the circadian regulation of the core clock component BMAL1 transcription. Plays a role in the regulation of telomere length. Plays a role as a global pre-mRNA alternative splicing modulator by regulating U2 small nuclear ribonucleoprotein (snRNP) biogenesis. Plays a role in mRNA stability. Component of the CRD-mediated complex that promotes MYC mRNA stabilization. Enhances the expression of specific genes, such as tumor necrosis factor TNFA, by regulating mRNA stability, possibly through binding to the 3'-untranslated region (UTR). Plays a role in mitotic cell cycle regulation. Involved in the formation of stable mitotic spindle microtubules (MTs) attachment to kinetochore, spindle organization and chromosome congression. Phosphorylation at Ser-58 by PLK1 is required for chromosome alignement and segregation and progression through mitosis. Also contributes to the targeting of AURKA to mitotic spindle MTs. Binds to double- and single-stranded DNA and RNA, poly(A), poly(C) and poly(G) oligoribonucleotides. Binds to chromatin-associated RNAs (caRNAs). Associates with chromatin to scaffold/matrix attachment region (S/MAR) elements in DNA. Associates with chromatin in a chromatin-associated RNAs (caRNAs)-dependent manner. Binds to the Xist RNA. Binds the long non-coding H19 RNA. Binds to SMN1/2 pre-mRNAs at G/U-rich regions. Binds to small nuclear RNAs (snRNAs). Binds to the 3'-UTR of TNFA mRNA. Binds (via RNA-binding RGG-box region) to the long non-coding Xist RNA; this binding is direct and bridges the Xist RNA and the inactive chromosome X (Xi). Also negatively regulates embryonic stem cell differentiation upon LIF signaling. Required for embryonic development. Binds to brown fat long non-coding RNA 1 (Blnc1); facilitates the recruitment of Blnc1 by ZBTB7B required to drive brown and beige fat development and thermogenesis. In Rattus norvegicus (Rat), this protein is Heterogeneous nuclear ribonucleoprotein U.